A 223-amino-acid polypeptide reads, in one-letter code: Cytolethal distending toxin subunit A (223 aa).

Residues 1–15 (MKKFLPSLLLMGSVA) form the signal peptide. Cysteine 16 is lipidated: N-palmitoyl cysteine. A lipid anchor (S-diacylglycerol cysteine) is attached at cysteine 16. The segment at 20–48 (QRMNDYSQPESQSDLAPKSSTIQPQPQPL) is disordered. The tract at residues 91-102 (WALAKRNWLWAY) is mediates binding to target cells. The region spanning 123–212 (HREYFRFVNQ…EPSRDQTWYL (90 aa)) is the Ricin B-type lectin domain.

Heterotrimer of 3 subunits, CdtA, CdtB and CdtC.

It is found in the cell outer membrane. Functionally, CDTs are cytotoxins which induce host cell distension, growth arrest in G2/M phase, nucleus swelling, and chromatin fragmentation in HeLa cells. CdtA, along with CdtC, probably forms a heterodimeric subunit required for the delivery of CdtB. The chain is Cytolethal distending toxin subunit A (cdtA) from Haemophilus ducreyi (strain 35000HP / ATCC 700724).